The primary structure comprises 556 residues: Potassium-transporting ATPase potassium-binding subunit (556 aa).

The next 10 helical transmembrane spans lie at 1–21, 60–80, 130–150, 173–193, 245–265, 281–301, 374–394, 416–436, 482–502, and 529–549; these read MTWICFLAGLALLAIALGIAQ, SYARAVLAFSFCGVVFLYALQ, GLCVQNFVSAATGIAIAVALI, LRILMPIAAVAAFLLIAGGAV, PQPWTNMLEIFLILLIPFSLP, ILAAMVVLFTVNLCAMAAAEF, GLYGMLVIAVIAVFIAGLLVG, ILVMPTLVLCGVALSLAVPGL, AALGAAMLLGRFVPIILILAL, and LIVFTAILVTALVFFPVLTLG.

The protein belongs to the KdpA family. The system is composed of three essential subunits: KdpA, KdpB and KdpC.

The protein resides in the cell membrane. In terms of biological role, part of the high-affinity ATP-driven potassium transport (or Kdp) system, which catalyzes the hydrolysis of ATP coupled with the electrogenic transport of potassium into the cytoplasm. This subunit binds the extracellular potassium ions and delivers the ions to the membrane domain of KdpB through an intramembrane tunnel. The sequence is that of Potassium-transporting ATPase potassium-binding subunit from Cutibacterium acnes (strain DSM 16379 / KPA171202) (Propionibacterium acnes).